A 73-amino-acid polypeptide reads, in one-letter code: UPF0154 protein MYCGA5700 (73 aa).

A helical transmembrane segment spans residues 5 to 25 (LALGLSIPLCLIVGAFVGYFV).

This sequence belongs to the UPF0154 family.

It is found in the membrane. The polypeptide is UPF0154 protein MYCGA5700 (Mycoplasmoides gallisepticum (strain R(low / passage 15 / clone 2)) (Mycoplasma gallisepticum)).